We begin with the raw amino-acid sequence, 240 residues long: Probable transcriptional regulatory protein HPAG1_0159 (240 aa).

Belongs to the TACO1 family.

It localises to the cytoplasm. In Helicobacter pylori (strain HPAG1), this protein is Probable transcriptional regulatory protein HPAG1_0159.